The following is a 122-amino-acid chain: Large ribosomal subunit protein uL14 (122 aa).

Belongs to the universal ribosomal protein uL14 family. Part of the 50S ribosomal subunit. Forms a cluster with proteins L3 and L19. In the 70S ribosome, L14 and L19 interact and together make contacts with the 16S rRNA in bridges B5 and B8.

Its function is as follows. Binds to 23S rRNA. Forms part of two intersubunit bridges in the 70S ribosome. The polypeptide is Large ribosomal subunit protein uL14 (Cupriavidus metallidurans (strain ATCC 43123 / DSM 2839 / NBRC 102507 / CH34) (Ralstonia metallidurans)).